The following is a 405-amino-acid chain: Acetate kinase (405 aa).

Residue Asn7 coordinates Mg(2+). Lys14 contacts ATP. Arg92 contributes to the substrate binding site. The Proton donor/acceptor role is filled by Asp149. ATP contacts are provided by residues 209 to 213 (HLGNG) and 284 to 286 (DMR). Glu389 serves as a coordination point for Mg(2+).

Belongs to the acetokinase family. As to quaternary structure, homodimer. Requires Mg(2+) as cofactor. The cofactor is Mn(2+).

The protein localises to the cytoplasm. It carries out the reaction acetate + ATP = acetyl phosphate + ADP. The protein operates within metabolic intermediate biosynthesis; acetyl-CoA biosynthesis; acetyl-CoA from acetate: step 1/2. In terms of biological role, catalyzes the formation of acetyl phosphate from acetate and ATP. Can also catalyze the reverse reaction. The polypeptide is Acetate kinase (Borreliella burgdorferi (strain ZS7) (Borrelia burgdorferi)).